The chain runs to 510 residues: NAD(P)H-quinone oxidoreductase subunit 2 B, chloroplastic (510 aa).

The next 13 membrane-spanning stretches (helical) occupy residues 24-44, 57-77, 99-119, 124-144, 149-169, 183-203, 227-247, 295-315, 323-343, 347-367, 395-415, 418-438, and 484-504; these read LLLFHGSFIFPECILIFGLIL, IPWLYFISSTSLVISITALLF, IFQFLILLCSTLCIPLSVEYI, MAITEFLLFVLTATLGGMFLC, LITIFVAPECFSLCSYLLSGY, YLLMGGASSSILVHGFSWLYG, PGISIALIFITVGIGFKLSPA, WHLHLEILAILSMILGNLIAI, MLAYSSIGQIGYVIIGIIVGD, GYASMITYMLFYISMNLGTFA, ALSLALCLLSLGGLPPLAGFF, LHLFWCGWQAGLYFLVSIGLL, and MIVCVIASTIPGISMNPIIAI.

The protein belongs to the complex I subunit 2 family. As to quaternary structure, NDH is composed of at least 16 different subunits, 5 of which are encoded in the nucleus.

It is found in the plastid. The protein resides in the chloroplast thylakoid membrane. The enzyme catalyses a plastoquinone + NADH + (n+1) H(+)(in) = a plastoquinol + NAD(+) + n H(+)(out). It carries out the reaction a plastoquinone + NADPH + (n+1) H(+)(in) = a plastoquinol + NADP(+) + n H(+)(out). Functionally, NDH shuttles electrons from NAD(P)H:plastoquinone, via FMN and iron-sulfur (Fe-S) centers, to quinones in the photosynthetic chain and possibly in a chloroplast respiratory chain. The immediate electron acceptor for the enzyme in this species is believed to be plastoquinone. Couples the redox reaction to proton translocation, and thus conserves the redox energy in a proton gradient. This is NAD(P)H-quinone oxidoreductase subunit 2 B, chloroplastic from Buxus microphylla (Littleleaf boxwood).